The following is a 50-amino-acid chain: MRDKIKLQSTESAYFYTTDKNKRNMAGKFEIKKYDPVLRKHVLFKEAKIK.

The protein belongs to the bacterial ribosomal protein bL33 family.

The polypeptide is Large ribosomal subunit protein bL33 (Hydrogenovibrio crunogenus (strain DSM 25203 / XCL-2) (Thiomicrospira crunogena)).